The following is a 350-amino-acid chain: Small ribosomal subunit biogenesis GTPase RsgA (350 aa).

Polar residues predominate over residues 1-17; sequence MSKNKLSKGQQRRVNAN. Residues 1 to 24 are disordered; sequence MSKNKLSKGQQRRVNANHQRRLKT. Positions 104–273 constitute a CP-type G domain; that stretch reads TSVLTRPDFY…VIDSPGVREF (170 aa). GTP contacts are provided by residues 160–163 and 214–222; these read NKID and GQSGVGKSS. Zn(2+) is bound by residues C297, C302, H304, and C310.

The protein belongs to the TRAFAC class YlqF/YawG GTPase family. RsgA subfamily. As to quaternary structure, monomer. Associates with 30S ribosomal subunit, binds 16S rRNA. Zn(2+) serves as cofactor.

It is found in the cytoplasm. Its function is as follows. One of several proteins that assist in the late maturation steps of the functional core of the 30S ribosomal subunit. Helps release RbfA from mature subunits. May play a role in the assembly of ribosomal proteins into the subunit. Circularly permuted GTPase that catalyzes slow GTP hydrolysis, GTPase activity is stimulated by the 30S ribosomal subunit. The sequence is that of Small ribosomal subunit biogenesis GTPase RsgA from Salmonella schwarzengrund (strain CVM19633).